A 591-amino-acid chain; its full sequence is Aspartate--tRNA(Asp/Asn) ligase (591 aa).

Residue Glu-174 coordinates L-aspartate. The segment at 198-201 is aspartate; sequence QLFK. Arg-220 is a binding site for L-aspartate. ATP contacts are provided by residues 220–222 and Gln-229; that span reads RDE. Position 450 (His-450) interacts with L-aspartate. Residue Glu-483 coordinates ATP. Arg-490 provides a ligand contact to L-aspartate. Residue 535-538 participates in ATP binding; the sequence is GLDR.

The protein belongs to the class-II aminoacyl-tRNA synthetase family. Type 1 subfamily. In terms of assembly, homodimer.

It localises to the cytoplasm. It carries out the reaction tRNA(Asx) + L-aspartate + ATP = L-aspartyl-tRNA(Asx) + AMP + diphosphate. In terms of biological role, aspartyl-tRNA synthetase with relaxed tRNA specificity since it is able to aspartylate not only its cognate tRNA(Asp) but also tRNA(Asn). Reaction proceeds in two steps: L-aspartate is first activated by ATP to form Asp-AMP and then transferred to the acceptor end of tRNA(Asp/Asn). The sequence is that of Aspartate--tRNA(Asp/Asn) ligase from Ectopseudomonas mendocina (strain ymp) (Pseudomonas mendocina).